Reading from the N-terminus, the 240-residue chain is MSLDMKEHPDAEVQKNQVLTLEDWKEKWVTRHISFHQEQGHQLLKKHLDTFLKGQSGLRVFFPLCGKAIEMKWFADRGHTVVGVEISEIGIREFFAEQNLSYTEEPLAEIAGAKVFKSSSGSISLYCCSIFDLPRANIGKFDRIWDRGALVAINPGDHDRYADIILSLLRKEFQYLVAVLSYDPTKHAGPPFYVPSAELKRLFGTKCSMQCLEEVDALEERHKAWGLDYLFEKLYLLTEK.

24 to 35 serves as a coordination point for S-adenosyl-L-methionine; that stretch reads WKEKWVTRHISF. Ser34 bears the Phosphoserine mark. Residue Phe35 coordinates substrate. N6-acetyllysine is present on Lys53. S-adenosyl-L-methionine contacts are provided by residues Leu64, Glu85, 129–130, and Arg147; that span reads SI.

This sequence belongs to the class I-like SAM-binding methyltransferase superfamily. TPMT family. As to quaternary structure, monomer.

It localises to the cytoplasm. It catalyses the reaction S-adenosyl-L-methionine + a thiopurine = S-adenosyl-L-homocysteine + a thiopurine S-methylether.. The enzyme catalyses mercaptopurine + S-adenosyl-L-methionine = 6-methylthiopurine + S-adenosyl-L-homocysteine + H(+). In terms of biological role, catalyzes the S-methylation of thiopurine drugs such as 6-mercaptopurine (also called mercaptopurine, 6-MP or its brand name Purinethol) using S-adenosyl-L-methionine as the methyl donor. TPMT activity modulates the cytotoxic effects of thiopurine prodrugs. A natural substrate for this enzyme has yet to be identified. The chain is Thiopurine S-methyltransferase (Tpmt) from Mus musculus (Mouse).